Here is a 147-residue protein sequence, read N- to C-terminus: Protein SprT-like (147 aa).

One can recognise a SprT-like domain in the interval 9–142 (AKVKEISLTY…CGKCRGKLIL (134 aa)). Histidine 65 contacts Zn(2+). Glutamate 66 is a catalytic residue. A Zn(2+)-binding site is contributed by histidine 69.

This sequence belongs to the SprT family. Requires Zn(2+) as cofactor.

Its subcellular location is the cytoplasm. This Lactococcus lactis subsp. lactis (strain IL1403) (Streptococcus lactis) protein is Protein SprT-like (yciD).